Reading from the N-terminus, the 1401-residue chain is DNA-directed RNA polymerase subunit beta (1401 aa).

It belongs to the RNA polymerase beta chain family. The RNAP catalytic core consists of 2 alpha, 1 beta, 1 beta' and 1 omega subunit. When a sigma factor is associated with the core the holoenzyme is formed, which can initiate transcription.

It catalyses the reaction RNA(n) + a ribonucleoside 5'-triphosphate = RNA(n+1) + diphosphate. Functionally, DNA-dependent RNA polymerase catalyzes the transcription of DNA into RNA using the four ribonucleoside triphosphates as substrates. This Desulforapulum autotrophicum (strain ATCC 43914 / DSM 3382 / VKM B-1955 / HRM2) (Desulfobacterium autotrophicum) protein is DNA-directed RNA polymerase subunit beta.